Reading from the N-terminus, the 220-residue chain is Large ribosomal subunit protein uL3 (220 aa).

Positions lysine 61–aspartate 81 are disordered.

This sequence belongs to the universal ribosomal protein uL3 family. In terms of assembly, part of the 50S ribosomal subunit. Forms a cluster with proteins L14 and L19.

Its function is as follows. One of the primary rRNA binding proteins, it binds directly near the 3'-end of the 23S rRNA, where it nucleates assembly of the 50S subunit. The polypeptide is Large ribosomal subunit protein uL3 (Staphylococcus epidermidis (strain ATCC 12228 / FDA PCI 1200)).